Consider the following 145-residue polypeptide: uncharacterized protein (145 aa).

A Phosphoserine modification is found at S67.

In terms of tissue distribution, expressed in retina and retinoblastoma.

This is an uncharacterized protein from Homo sapiens (Human).